The following is a 239-amino-acid chain: Fatty acid metabolism regulator protein (239 aa).

Residues 6–74 (QSPAGFAEEY…HGKPTKVNNF (69 aa)) enclose the HTH gntR-type domain. Residues 34-53 (ERELSELIGVTRTTLREVLQ) constitute a DNA-binding region (H-T-H motif).

In terms of assembly, homodimer.

Its subcellular location is the cytoplasm. In terms of biological role, multifunctional regulator of fatty acid metabolism. This Klebsiella pneumoniae (strain 342) protein is Fatty acid metabolism regulator protein.